Consider the following 407-residue polypeptide: Probable tRNA sulfurtransferase (407 aa).

One can recognise a THUMP domain in the interval 61–165 (NEITYRLSKI…LDAIYMYEEV (105 aa)). ATP-binding positions include 183–184 (ML), 208–209 (HF), R265, G287, and Q296.

It belongs to the ThiI family.

It is found in the cytoplasm. The enzyme catalyses [ThiI sulfur-carrier protein]-S-sulfanyl-L-cysteine + a uridine in tRNA + 2 reduced [2Fe-2S]-[ferredoxin] + ATP + H(+) = [ThiI sulfur-carrier protein]-L-cysteine + a 4-thiouridine in tRNA + 2 oxidized [2Fe-2S]-[ferredoxin] + AMP + diphosphate. It carries out the reaction [ThiS sulfur-carrier protein]-C-terminal Gly-Gly-AMP + S-sulfanyl-L-cysteinyl-[cysteine desulfurase] + AH2 = [ThiS sulfur-carrier protein]-C-terminal-Gly-aminoethanethioate + L-cysteinyl-[cysteine desulfurase] + A + AMP + 2 H(+). It participates in cofactor biosynthesis; thiamine diphosphate biosynthesis. In terms of biological role, catalyzes the ATP-dependent transfer of a sulfur to tRNA to produce 4-thiouridine in position 8 of tRNAs, which functions as a near-UV photosensor. Also catalyzes the transfer of sulfur to the sulfur carrier protein ThiS, forming ThiS-thiocarboxylate. This is a step in the synthesis of thiazole, in the thiamine biosynthesis pathway. The sulfur is donated as persulfide by IscS. The protein is Probable tRNA sulfurtransferase of Staphylococcus aureus (strain bovine RF122 / ET3-1).